A 297-amino-acid chain; its full sequence is 3-methyl-2-oxobutanoate hydroxymethyltransferase (297 aa).

Polar residues predominate over residues 1 to 15 (MSEQISEQSEQNVYG). Positions 1 to 40 (MSEQISEQSEQNVYGASSPVPAGESSPSAASAPRTKVRTH) are disordered. The segment covering 16–33 (ASSPVPAGESSPSAASAP) has biased composition (low complexity). Mg(2+) is bound by residues Asp-78 and Asp-117. 3-methyl-2-oxobutanoate contacts are provided by residues 78–79 (DS), Asp-117, and Lys-147. Glu-149 provides a ligand contact to Mg(2+). Glu-215 acts as the Proton acceptor in catalysis.

The protein belongs to the PanB family. As to quaternary structure, homodecamer; pentamer of dimers. Mg(2+) is required as a cofactor.

It localises to the cytoplasm. It catalyses the reaction 3-methyl-2-oxobutanoate + (6R)-5,10-methylene-5,6,7,8-tetrahydrofolate + H2O = 2-dehydropantoate + (6S)-5,6,7,8-tetrahydrofolate. Its pathway is cofactor biosynthesis; (R)-pantothenate biosynthesis; (R)-pantoate from 3-methyl-2-oxobutanoate: step 1/2. Catalyzes the reversible reaction in which hydroxymethyl group from 5,10-methylenetetrahydrofolate is transferred onto alpha-ketoisovalerate to form ketopantoate. This is 3-methyl-2-oxobutanoate hydroxymethyltransferase from Mycobacterium marinum (strain ATCC BAA-535 / M).